We begin with the raw amino-acid sequence, 710 residues long: Bifunctional lysine-specific demethylase and histidyl-hydroxylase NO66 (710 aa).

The disordered stretch occupies residues 103–137 (TDEMNKTKKKQKKIMKKEIRKRTKRKRKSVNKREL). Residues 109–132 (TKKKQKKIMKKEIRKRTKRKRKSV) show a composition bias toward basic residues. In terms of domain architecture, JmjC spans 359-506 (CSIQLTNPQS…DLLERVIPPA (148 aa)). Histidine 405, aspartate 407, and histidine 472 together coordinate Fe cation.

It belongs to the ROX family. NO66 subfamily. Requires Fe(2+) as cofactor.

It localises to the nucleus. It catalyses the reaction N(6),N(6)-dimethyl-L-lysyl(36)-[histone H3] + 2 2-oxoglutarate + 2 O2 = L-lysyl(36)-[histone H3] + 2 formaldehyde + 2 succinate + 2 CO2. In terms of biological role, oxygenase that can act as both a histone lysine demethylase and a ribosomal histidine hydroxylase. Specifically demethylates 'Lys-4' (H3K4me) and 'Lys-36' (H3K36me) of histone H3, thereby playing a central role in histone code. This chain is Bifunctional lysine-specific demethylase and histidyl-hydroxylase NO66, found in Brugia malayi (Filarial nematode worm).